The sequence spans 345 residues: S-adenosylmethionine:tRNA ribosyltransferase-isomerase (345 aa).

This sequence belongs to the QueA family. Monomer.

It localises to the cytoplasm. It carries out the reaction 7-aminomethyl-7-carbaguanosine(34) in tRNA + S-adenosyl-L-methionine = epoxyqueuosine(34) in tRNA + adenine + L-methionine + 2 H(+). It functions in the pathway tRNA modification; tRNA-queuosine biosynthesis. Transfers and isomerizes the ribose moiety from AdoMet to the 7-aminomethyl group of 7-deazaguanine (preQ1-tRNA) to give epoxyqueuosine (oQ-tRNA). This chain is S-adenosylmethionine:tRNA ribosyltransferase-isomerase, found in Acidithiobacillus ferrooxidans (strain ATCC 53993 / BNL-5-31) (Leptospirillum ferrooxidans (ATCC 53993)).